Here is a 389-residue protein sequence, read N- to C-terminus: UDP-N-acetylglucosamine--N-acetylmuramyl-(pentapeptide) pyrophosphoryl-undecaprenol N-acetylglucosamine transferase (389 aa).

UDP-N-acetyl-alpha-D-glucosamine is bound by residues 39-41 (TGG), asparagine 157, arginine 193, serine 221, isoleucine 275, 294-299 (ALTVSE), and glutamine 320.

Belongs to the glycosyltransferase 28 family. MurG subfamily.

It is found in the cell inner membrane. The enzyme catalyses di-trans,octa-cis-undecaprenyl diphospho-N-acetyl-alpha-D-muramoyl-L-alanyl-D-glutamyl-meso-2,6-diaminopimeloyl-D-alanyl-D-alanine + UDP-N-acetyl-alpha-D-glucosamine = di-trans,octa-cis-undecaprenyl diphospho-[N-acetyl-alpha-D-glucosaminyl-(1-&gt;4)]-N-acetyl-alpha-D-muramoyl-L-alanyl-D-glutamyl-meso-2,6-diaminopimeloyl-D-alanyl-D-alanine + UDP + H(+). Its pathway is cell wall biogenesis; peptidoglycan biosynthesis. In terms of biological role, cell wall formation. Catalyzes the transfer of a GlcNAc subunit on undecaprenyl-pyrophosphoryl-MurNAc-pentapeptide (lipid intermediate I) to form undecaprenyl-pyrophosphoryl-MurNAc-(pentapeptide)GlcNAc (lipid intermediate II). In Saccharophagus degradans (strain 2-40 / ATCC 43961 / DSM 17024), this protein is UDP-N-acetylglucosamine--N-acetylmuramyl-(pentapeptide) pyrophosphoryl-undecaprenol N-acetylglucosamine transferase.